Reading from the N-terminus, the 291-residue chain is 4-hydroxy-tetrahydrodipicolinate synthase (291 aa).

Position 47 (T47) interacts with pyruvate. The active-site Proton donor/acceptor is the Y136. The active-site Schiff-base intermediate with substrate is K164. Residue I206 participates in pyruvate binding.

The protein belongs to the DapA family. As to quaternary structure, homotetramer; dimer of dimers.

It is found in the cytoplasm. The catalysed reaction is L-aspartate 4-semialdehyde + pyruvate = (2S,4S)-4-hydroxy-2,3,4,5-tetrahydrodipicolinate + H2O + H(+). The protein operates within amino-acid biosynthesis; L-lysine biosynthesis via DAP pathway; (S)-tetrahydrodipicolinate from L-aspartate: step 3/4. Functionally, catalyzes the condensation of (S)-aspartate-beta-semialdehyde [(S)-ASA] and pyruvate to 4-hydroxy-tetrahydrodipicolinate (HTPA). This chain is 4-hydroxy-tetrahydrodipicolinate synthase, found in Leuconostoc citreum (strain KM20).